The following is a 430-amino-acid chain: MAVSARAGIVITGTEVLTGRVQDRNGPWIADRLLELGVELAHITICGDRPADIEAQLRFMAEQGVDLIVTSGGLGPTADDMTVEVVARYCGRELVLDDELENRIANILKKLMGRNPAIEPANFDSIRAANRKQAMIPAGSQVIDPVGTAPGLVVPGRPAVMVLPGPPRELQPIWSKAIQTAPVQDAIAGRTTYRQETIRIFGLPESSLADTLRDAEAAIPGFDLVEITTCLRRGEIEMVTRFEPNAAQVYTQLARLLRDRHGHQVYSEDGASVDELVAKLLTGRRIATAESCTAGLLAARLTDRPGSSKYVAGAVVAYSNEAKAQLLGVDPALIEAHGAVSEPVAQAMAAGALQGFGADTATAITGIAGPSGGTPEKPVGTVCFTVLLDDGRTTTRTVRLPGNRSDIRERSTTVAMHLLRRTLSGIPGSP.

The protein belongs to the CinA family.

In Mycobacterium tuberculosis (strain ATCC 25177 / H37Ra), this protein is CinA-like protein.